The primary structure comprises 290 residues: Short chain dehydrogenase/reductase nsrO (290 aa).

Residues Ile-37 and Lys-149 each contribute to the NADP(+) site. Active-site proton donor residues include Ser-168 and Tyr-182. Residues Tyr-182, Lys-186, and Thr-221 each contribute to the NADP(+) site. The Lowers pKa of active site Tyr role is filled by Lys-186.

This sequence belongs to the short-chain dehydrogenases/reductases (SDR) family.

The protein operates within secondary metabolite biosynthesis. Functionally, short chain dehydrogenase/reductase; part of the gene cluster that mediates the biosynthesis of the tetrahydroxanthone dimer neosartorin, which exhibits antibacterial activity. The two different monomeric units appear to be synthesized by the same set of enzymes, among which the Baeyer-Villiger monooxygenase nsrF is the key enzyme for the divergence of the biosynthetic routes. The pathway begins with the synthesis of atrochrysone thioester by the polyketide synthase nsrB. The atrochrysone carboxyl ACP thioesterase nsrC then breaks the thioester bond and releases the atrochrysone carboxylic acid from AacuL. Atrochrysone carboxylic acid is decarboxylated by the decarboxylase nsrE, and oxidized by the anthrone oxygenase nsrD to yield emodin. Emodin is then reduced to emodin hydroquinone by the oxidoreductase nsrR. A-ring reduction by the short chain dehydrogenase nsrJ, dehydration by the scytalone dehydratase-like protein nsrI and probable spontaneous re-oxidation, results in overall deoxygenation to chrysophanol. The Baeyer-Villiger monooxygenase nsrF accepts chrysophanol as a substrate to insert one oxygen atom at two different positions to yield the precursors of both monomric units. NsrF is promiscuous/flexible in interacting with the 2 (non methylated and methylated) aromatic rings of chrysophanol, thus diverging the biosynthetic pathway at this point. After the hydrolysis of the lactones, methylesterification by the methyltransferase nsrG yields respectively moniliphenone and 2,2',6'-trihydroxy-4-methyl-6-methoxya-cyldiphenylmethanone. The next steps are the hydroxylation by the FAD-dependent monooxygenase nsrK, followed by isomerization by the monooxygenase nsrQ. The short chain dehydrogenase/reductase nsrO then catalyzes the C-5 ketoreduction to give the xanthone skeleton of blennolide C and 5-acetylblennolide A. The acetyltransferase nsrL has a strict substrate specificity and uses only blennolide A but not blennolide C to yield 5-acetylblennolide A as the single-acetylated product. In the final step of the biosynthesis, the heterodimerization of the 2 xanthones, blennolide C and 5-acetylblennolide A, is catalyzed by the cytochrome P450 monooxygenase nsrP. NsrP can utilize at least three different xanthones as its substrates to perform the dimerization reaction. The chain is Short chain dehydrogenase/reductase nsrO from Aspergillus novofumigatus (strain IBT 16806).